A 423-amino-acid polypeptide reads, in one-letter code: Sulfate adenylyltransferase (423 aa).

The protein belongs to the sulfate adenylyltransferase family.

The catalysed reaction is sulfate + ATP + H(+) = adenosine 5'-phosphosulfate + diphosphate. It functions in the pathway sulfur metabolism; hydrogen sulfide biosynthesis; sulfite from sulfate: step 1/3. The protein is Sulfate adenylyltransferase of Desulfovibrio desulfuricans (strain ATCC 27774 / DSM 6949 / MB).